We begin with the raw amino-acid sequence, 214 residues long: Pyridoxine/pyridoxamine 5'-phosphate oxidase (214 aa).

Substrate-binding positions include 8 to 11 and lysine 66; that span reads RTNY. FMN-binding positions include 61-66, 76-77, arginine 82, lysine 83, and glutamine 105; these read RIVLIK and FT. Substrate contacts are provided by tyrosine 123, arginine 127, and serine 131. FMN is bound by residues 140–141 and tryptophan 184; that span reads QS. 190 to 192 provides a ligand contact to substrate; it reads RLH. An FMN-binding site is contributed by arginine 194.

This sequence belongs to the pyridoxamine 5'-phosphate oxidase family. As to quaternary structure, homodimer. The cofactor is FMN.

The enzyme catalyses pyridoxamine 5'-phosphate + O2 + H2O = pyridoxal 5'-phosphate + H2O2 + NH4(+). It catalyses the reaction pyridoxine 5'-phosphate + O2 = pyridoxal 5'-phosphate + H2O2. Its pathway is cofactor metabolism; pyridoxal 5'-phosphate salvage; pyridoxal 5'-phosphate from pyridoxamine 5'-phosphate: step 1/1. The protein operates within cofactor metabolism; pyridoxal 5'-phosphate salvage; pyridoxal 5'-phosphate from pyridoxine 5'-phosphate: step 1/1. Functionally, catalyzes the oxidation of either pyridoxine 5'-phosphate (PNP) or pyridoxamine 5'-phosphate (PMP) into pyridoxal 5'-phosphate (PLP). The sequence is that of Pyridoxine/pyridoxamine 5'-phosphate oxidase from Burkholderia thailandensis (strain ATCC 700388 / DSM 13276 / CCUG 48851 / CIP 106301 / E264).